A 572-amino-acid polypeptide reads, in one-letter code: Proline--tRNA ligase (572 aa).

This sequence belongs to the class-II aminoacyl-tRNA synthetase family. ProS type 1 subfamily. As to quaternary structure, homodimer.

It is found in the cytoplasm. It carries out the reaction tRNA(Pro) + L-proline + ATP = L-prolyl-tRNA(Pro) + AMP + diphosphate. Catalyzes the attachment of proline to tRNA(Pro) in a two-step reaction: proline is first activated by ATP to form Pro-AMP and then transferred to the acceptor end of tRNA(Pro). As ProRS can inadvertently accommodate and process non-cognate amino acids such as alanine and cysteine, to avoid such errors it has two additional distinct editing activities against alanine. One activity is designated as 'pretransfer' editing and involves the tRNA(Pro)-independent hydrolysis of activated Ala-AMP. The other activity is designated 'posttransfer' editing and involves deacylation of mischarged Ala-tRNA(Pro). The misacylated Cys-tRNA(Pro) is not edited by ProRS. This Yersinia pestis (strain Pestoides F) protein is Proline--tRNA ligase.